The following is a 273-amino-acid chain: Pantothenate synthetase (273 aa).

Residue 27 to 34 (MGALHEGH) coordinates ATP. The active-site Proton donor is His34. Gln58 contributes to the (R)-pantoate binding site. Residue Gln58 coordinates beta-alanine. 144-147 (GKKD) contributes to the ATP binding site. Gln150 is a binding site for (R)-pantoate. Residues Val173 and 181–184 (LSSR) each bind ATP.

The protein belongs to the pantothenate synthetase family. Homodimer.

Its subcellular location is the cytoplasm. It carries out the reaction (R)-pantoate + beta-alanine + ATP = (R)-pantothenate + AMP + diphosphate + H(+). The protein operates within cofactor biosynthesis; (R)-pantothenate biosynthesis; (R)-pantothenate from (R)-pantoate and beta-alanine: step 1/1. Catalyzes the condensation of pantoate with beta-alanine in an ATP-dependent reaction via a pantoyl-adenylate intermediate. This Sulfurimonas denitrificans (strain ATCC 33889 / DSM 1251) (Thiomicrospira denitrificans (strain ATCC 33889 / DSM 1251)) protein is Pantothenate synthetase.